A 555-amino-acid chain; its full sequence is Phosphomethylpyrimidine synthase (555 aa).

Residues 78–104 (VRDRWGFDNGSAESTKGELSMSERKPR) are disordered. Substrate-binding positions include asparagine 191, methionine 220, tyrosine 249, histidine 285, 305–307 (SRG), 346–349 (DALR), and glutamate 385. Zn(2+) is bound at residue histidine 389. Residue tyrosine 412 participates in substrate binding. Histidine 453 contributes to the Zn(2+) binding site. 3 residues coordinate [4Fe-4S] cluster: cysteine 535, cysteine 538, and cysteine 543.

This sequence belongs to the ThiC family. [4Fe-4S] cluster serves as cofactor.

It catalyses the reaction 5-amino-1-(5-phospho-beta-D-ribosyl)imidazole + S-adenosyl-L-methionine = 4-amino-2-methyl-5-(phosphooxymethyl)pyrimidine + CO + 5'-deoxyadenosine + formate + L-methionine + 3 H(+). It participates in cofactor biosynthesis; thiamine diphosphate biosynthesis. In terms of biological role, catalyzes the synthesis of the hydroxymethylpyrimidine phosphate (HMP-P) moiety of thiamine from aminoimidazole ribotide (AIR) in a radical S-adenosyl-L-methionine (SAM)-dependent reaction. The chain is Phosphomethylpyrimidine synthase from Chlorobaculum parvum (strain DSM 263 / NCIMB 8327) (Chlorobium vibrioforme subsp. thiosulfatophilum).